Consider the following 179-residue polypeptide: UPF0227 protein Ssed_2836 (179 aa).

This sequence belongs to the UPF0227 family.

In Shewanella sediminis (strain HAW-EB3), this protein is UPF0227 protein Ssed_2836.